A 111-amino-acid chain; its full sequence is Class I hydrophobin SC4 (111 aa).

An N-terminal signal peptide occupies residues 1 to 25; sequence MRFSLALLALPALAAAAPVPGGGKG. 4 disulfides stabilise this stretch: Cys30–Cys37, Cys38–Cys72, Cys86–Cys92, and Cys93–Cys106. The N-linked (GlcNAc...) asparagine glycan is linked to Asn39.

The protein belongs to the fungal hydrophobin family. In terms of assembly, self-assembles to form functional amyloid fibrils called rodlets. Self-assembly into fibrillar rodlets occurs spontaneously at hydrophobic:hydrophilic interfaces and the rodlets further associate laterally to form amphipathic monolayers.

Its subcellular location is the secreted. The protein resides in the cell wall. Its function is as follows. Aerial growth, conidiation, and dispersal of filamentous fungi in the environment rely upon a capability of their secreting small amphipathic proteins called hydrophobins (HPBs) with low sequence identity. Class I can self-assemble into an outermost layer of rodlet bundles on aerial cell surfaces, conferring cellular hydrophobicity that supports fungal growth, development and dispersal; whereas Class II form highly ordered films at water-air interfaces through intermolecular interactions but contribute nothing to the rodlet structure. SC4 is a dikaryon-specific class I hydrophobin that contributes to the formation of aerial hyphae and fruiting bodies. Plays a role within fruiting bodies by preventing gas channels filling with water under wet conditions, probably serving uninterrupted gas exchange. SC4 cannot fully substitute for SC3. Involved in the unusual characteristic of mounds to adhere to and completely envelop adjacent fruiting bodies on mosaic colonies. The chain is Class I hydrophobin SC4 from Schizophyllum commune (Split gill fungus).